The following is a 229-amino-acid chain: Peptidase E (229 aa).

Active-site charge relay system residues include Ser120, Asp135, and His157.

This sequence belongs to the peptidase S51 family.

It is found in the cytoplasm. It carries out the reaction Dipeptidase E catalyzes the hydrolysis of dipeptides Asp-|-Xaa. It does not act on peptides with N-terminal Glu, Asn or Gln, nor does it cleave isoaspartyl peptides.. Hydrolyzes dipeptides containing N-terminal aspartate residues. May play a role in allowing the cell to use peptide aspartate to spare carbon otherwise required for the synthesis of the aspartate family of amino acids. The polypeptide is Peptidase E (Salmonella paratyphi C (strain RKS4594)).